The primary structure comprises 113 residues: Flagellar hook-basal body complex protein FliE (113 aa).

It belongs to the FliE family.

The protein resides in the bacterial flagellum basal body. The polypeptide is Flagellar hook-basal body complex protein FliE (Burkholderia mallei (strain NCTC 10247)).